The following is a 423-amino-acid chain: Adenylosuccinate synthetase (423 aa).

Residues 13–19 (GDEGKGK) and 41–43 (GHT) each bind GTP. Catalysis depends on D14, which acts as the Proton acceptor. Residues D14 and G41 each contribute to the Mg(2+) site. IMP contacts are provided by residues 14–17 (DEGK), 39–42 (NAGH), T130, R144, Q223, T238, and R302. H42 acts as the Proton donor in catalysis. Residue 298–304 (SVTGRKR) participates in substrate binding. Residues R304 and 410 to 412 (SVG) contribute to the GTP site.

The protein belongs to the adenylosuccinate synthetase family. In terms of assembly, homodimer. It depends on Mg(2+) as a cofactor.

The protein localises to the cytoplasm. It catalyses the reaction IMP + L-aspartate + GTP = N(6)-(1,2-dicarboxyethyl)-AMP + GDP + phosphate + 2 H(+). It participates in purine metabolism; AMP biosynthesis via de novo pathway; AMP from IMP: step 1/2. Functionally, plays an important role in the de novo pathway of purine nucleotide biosynthesis. Catalyzes the first committed step in the biosynthesis of AMP from IMP. The chain is Adenylosuccinate synthetase from Porphyromonas gingivalis (strain ATCC BAA-308 / W83).